Reading from the N-terminus, the 562-residue chain is Putative transport protein ECA2683 (562 aa).

6 helical membrane passes run 8–28, 32–52, 66–86, 93–113, 116–136, and 158–178; these read LLNG…LCLG, LGPV…LLGQ, FMLF…SIFF, FMLA…LGKL, WGIG…PVLV, and HLSL…IFGA. 2 RCK C-terminal domains span residues 202–288 and 290–373; these read LDVD…NFRD and KEVF…RIGF. A run of 5 helical transmembrane segments spans residues 383–403, 406–426, 447–467, 478–498, and 537–557; these read LLAF…TIQF, FTFG…LGFL, FGLM…INSS, SGLI…AYVL, and GTYA…VVIW.

This sequence belongs to the AAE transporter (TC 2.A.81) family. YbjL subfamily.

The protein resides in the cell membrane. In Pectobacterium atrosepticum (strain SCRI 1043 / ATCC BAA-672) (Erwinia carotovora subsp. atroseptica), this protein is Putative transport protein ECA2683.